A 118-amino-acid polypeptide reads, in one-letter code: MERLKNHREFVAVLKRRRRVSDADIVLHYVVRTPSTPTGAAPARRLGLAVSKSVGNAVVRNTVKRRFRVLAHRYEHELPADCDIVLRAKPGAAHASFQSLEAQIQALFRAVMRKSEQS.

It belongs to the RnpA family. As to quaternary structure, consists of a catalytic RNA component (M1 or rnpB) and a protein subunit.

It catalyses the reaction Endonucleolytic cleavage of RNA, removing 5'-extranucleotides from tRNA precursor.. Its function is as follows. RNaseP catalyzes the removal of the 5'-leader sequence from pre-tRNA to produce the mature 5'-terminus. It can also cleave other RNA substrates such as 4.5S RNA. The protein component plays an auxiliary but essential role in vivo by binding to the 5'-leader sequence and broadening the substrate specificity of the ribozyme. This chain is Ribonuclease P protein component, found in Bifidobacterium animalis subsp. lactis (strain AD011).